We begin with the raw amino-acid sequence, 169 residues long: Probable phospholipid hydroperoxide glutathione peroxidase (169 aa).

Cys-43 is a catalytic residue.

It belongs to the glutathione peroxidase family. Monomer. Has a tendency to form higher mass oligomers. Interacts with FUNDC1; this interaction promotes GPX4 recruitment into mitochondria through TOM/TIM complex where it is degraded by mitophagy.

It localises to the cytoplasm. It carries out the reaction a hydroperoxy polyunsaturated fatty acid + 2 glutathione = a hydroxy polyunsaturated fatty acid + glutathione disulfide + H2O. Protects cells and enzymes from oxidative damage, by catalyzing the reduction of hydrogen peroxide, lipid peroxides and organic hydroperoxide, by glutathione. This Solanum lycopersicum (Tomato) protein is Probable phospholipid hydroperoxide glutathione peroxidase (GPXle-1).